Reading from the N-terminus, the 65-residue chain is Large ribosomal subunit protein bL35 (65 aa).

Positions 1 to 25 are disordered; sequence MPKMKSHRGAAKRFKKTGTGKLKRA.

This sequence belongs to the bacterial ribosomal protein bL35 family.

In Clostridium botulinum (strain Alaska E43 / Type E3), this protein is Large ribosomal subunit protein bL35.